A 656-amino-acid polypeptide reads, in one-letter code: PAN2-PAN3 deadenylation complex subunit PAN3 (656 aa).

A C3H1-type zinc finger spans residues 15-44 (SFKGTQCRNIIIHGYCKFENEGCQFNHGNS). The segment at 71 to 104 (KTSSSFTPGKSPAVRSPDFSSLPAFQPGAPVNDQ) is disordered. The PABPC-interacting motif-2 (PAM-2) motif lies at 128 to 148 (AFAPSFNPYASESFTPSVSAG). The interval 271–525 (QVFPRGSLPD…NIEDFTKLFS (255 aa)) is pseudokinase domain. Residues R325, 375 to 382 (DYYPQSQS), and 428 to 429 (KK) each bind ATP. The stretch at 526–564 (HKVLSVVNSLQYNSEYLEQQLSRELENARLFRLMCKLNA) forms a coiled coil. The knob domain stretch occupies residues 565 to 656 (IYGRLESRID…IDSTFRALTQ (92 aa)).

This sequence belongs to the protein kinase superfamily. PAN3 family. Homodimer. Forms a heterotrimer with a catalytic subunit PAN2 to form the poly(A)-nuclease (PAN) deadenylation complex. Interacts (via PAM-2 motif) with poly(A)-binding protein PAB1 (via PABC domain), conferring substrate specificity of the enzyme complex.

The protein resides in the cytoplasm. Its function is as follows. Regulatory subunit of the poly(A)-nuclease (PAN) deadenylation complex, one of two cytoplasmic mRNA deadenylases involved in mRNA turnover. PAN specifically shortens poly(A) tails of RNA and the activity is stimulated by poly(A)-binding protein PAB1. PAN deadenylation is followed by rapid degradation of the shortened mRNA tails by the CCR4-NOT complex. Deadenylated mRNAs are then degraded by two alternative mechanisms, namely exosome-mediated 3'-5' exonucleolytic degradation, or deadenylation-dependent mRNA decaping and subsequent 5'-3' exonucleolytic degradation by XRN1. May also be involved in post-transcriptional maturation of mRNA poly(A) tails. PAN3 acts as a positive regulator for PAN activity, recruiting the catalytic subunit PAN2 to mRNA via its interaction with RNA and with PAB1. This Kluyveromyces lactis (strain ATCC 8585 / CBS 2359 / DSM 70799 / NBRC 1267 / NRRL Y-1140 / WM37) (Yeast) protein is PAN2-PAN3 deadenylation complex subunit PAN3.